We begin with the raw amino-acid sequence, 406 residues long: Probable tRNA sulfurtransferase (406 aa).

The 103-residue stretch at 60 to 162 (PEAKARLQDT…PGAALLEVER (103 aa)) folds into the THUMP domain. ATP-binding positions include 180–181 (LL), 205–206 (HF), arginine 262, glycine 284, and glutamine 293.

It belongs to the ThiI family.

The protein localises to the cytoplasm. The enzyme catalyses [ThiI sulfur-carrier protein]-S-sulfanyl-L-cysteine + a uridine in tRNA + 2 reduced [2Fe-2S]-[ferredoxin] + ATP + H(+) = [ThiI sulfur-carrier protein]-L-cysteine + a 4-thiouridine in tRNA + 2 oxidized [2Fe-2S]-[ferredoxin] + AMP + diphosphate. The catalysed reaction is [ThiS sulfur-carrier protein]-C-terminal Gly-Gly-AMP + S-sulfanyl-L-cysteinyl-[cysteine desulfurase] + AH2 = [ThiS sulfur-carrier protein]-C-terminal-Gly-aminoethanethioate + L-cysteinyl-[cysteine desulfurase] + A + AMP + 2 H(+). It functions in the pathway cofactor biosynthesis; thiamine diphosphate biosynthesis. Catalyzes the ATP-dependent transfer of a sulfur to tRNA to produce 4-thiouridine in position 8 of tRNAs, which functions as a near-UV photosensor. Also catalyzes the transfer of sulfur to the sulfur carrier protein ThiS, forming ThiS-thiocarboxylate. This is a step in the synthesis of thiazole, in the thiamine biosynthesis pathway. The sulfur is donated as persulfide by IscS. In Thermus thermophilus (strain ATCC 27634 / DSM 579 / HB8), this protein is Probable tRNA sulfurtransferase.